Consider the following 252-residue polypeptide: 5-oxoprolinase subunit A (252 aa).

Belongs to the LamB/PxpA family. As to quaternary structure, forms a complex composed of PxpA, PxpB and PxpC.

The catalysed reaction is 5-oxo-L-proline + ATP + 2 H2O = L-glutamate + ADP + phosphate + H(+). Its function is as follows. Catalyzes the cleavage of 5-oxoproline to form L-glutamate coupled to the hydrolysis of ATP to ADP and inorganic phosphate. The chain is 5-oxoprolinase subunit A from Mycolicibacterium gilvum (strain PYR-GCK) (Mycobacterium gilvum (strain PYR-GCK)).